The sequence spans 161 residues: Glutaredoxin-2, mitochondrial (161 aa).

A mitochondrion-targeting transit peptide spans 1–19; that stretch reads MLWRRAALAGTRLVWSRSG. Ser20 bears the Phosphoserine mark. Residues 54–154 form the Glutaredoxin domain; that stretch reads VNQIQETISD…PLVHQCYLKK (101 aa). Cys65 contributes to the [2Fe-2S] cluster binding site. Lys71 lines the glutathione pocket. Cys74 bears the S-glutathionyl cysteine; alternate mark. A disulfide bridge links Cys74 with Cys77. Residues Gln106 and Val118 each coordinate glutathione. Cys150 serves as a coordination point for [2Fe-2S] cluster.

The protein belongs to the glutaredoxin family. As to quaternary structure, monomer; active form. Homodimer; inactive form. The homodimer is probably linked by 1 2Fe-2S cluster.

It localises to the mitochondrion. The 2Fe-2S present in the homodimer leads to inactivation of the enzyme. The 2Fe-2S may serve as a redox sensor: the presence of one-electron oxidants or reductants leading to the loss of the 2Fe-2S cluster, subsequent monomerization and activation of the enzyme. Glutathione-dependent oxidoreductase that facilitates the maintenance of mitochondrial redox homeostasis upon induction of apoptosis by oxidative stress. Involved in response to hydrogen peroxide and regulation of apoptosis caused by oxidative stress. Acts as a very efficient catalyst of monothiol reactions because of its high affinity for protein glutathione-mixed disulfides. Can receive electrons not only from glutathione (GSH), but also from thioredoxin reductase supporting both monothiol and dithiol reactions. Efficiently catalyzes both glutathionylation and deglutathionylation of mitochondrial complex I, which in turn regulates the superoxide production by the complex. Overexpression decreases the susceptibility to apoptosis and prevents loss of cardiolipin and cytochrome c release. The sequence is that of Glutaredoxin-2, mitochondrial (GLRX2) from Pongo abelii (Sumatran orangutan).